Consider the following 130-residue polypeptide: uncharacterized protein (130 aa).

Residues 76-102 (RKCKNGPSPNKRGSASGCSRRGGGRGS) are disordered.

This is an uncharacterized protein from Saccharomyces cerevisiae (strain ATCC 204508 / S288c) (Baker's yeast).